Reading from the N-terminus, the 328-residue chain is DNA-directed RNA polymerase subunit alpha (328 aa).

The tract at residues Met1–Glu230 is alpha N-terminal domain (alpha-NTD). An alpha C-terminal domain (alpha-CTD) region spans residues Arg248–Ser328.

Belongs to the RNA polymerase alpha chain family. Homodimer. The RNAP catalytic core consists of 2 alpha, 1 beta, 1 beta' and 1 omega subunit. When a sigma factor is associated with the core the holoenzyme is formed, which can initiate transcription.

The enzyme catalyses RNA(n) + a ribonucleoside 5'-triphosphate = RNA(n+1) + diphosphate. Its function is as follows. DNA-dependent RNA polymerase catalyzes the transcription of DNA into RNA using the four ribonucleoside triphosphates as substrates. This is DNA-directed RNA polymerase subunit alpha from Salinibacter ruber (strain DSM 13855 / M31).